Here is an 89-residue protein sequence, read N- to C-terminus: Small ribosomal subunit protein uS15 (89 aa).

It belongs to the universal ribosomal protein uS15 family. Part of the 30S ribosomal subunit. Forms a bridge to the 50S subunit in the 70S ribosome, contacting the 23S rRNA.

In terms of biological role, one of the primary rRNA binding proteins, it binds directly to 16S rRNA where it helps nucleate assembly of the platform of the 30S subunit by binding and bridging several RNA helices of the 16S rRNA. Its function is as follows. Forms an intersubunit bridge (bridge B4) with the 23S rRNA of the 50S subunit in the ribosome. The protein is Small ribosomal subunit protein uS15 of Caulobacter sp. (strain K31).